Here is a 199-residue protein sequence, read N- to C-terminus: Peroxynitrite isomerase (199 aa).

A GXWXGXG motif is present at residues 21-27; sequence GEWEGRG. H190 contributes to the heme b binding site.

This sequence belongs to the nitrobindin family. In terms of assembly, homodimer. Requires heme b as cofactor.

The catalysed reaction is peroxynitrite = nitrate. It participates in nitrogen metabolism. Functionally, heme-binding protein able to scavenge peroxynitrite and to protect free L-tyrosine against peroxynitrite-mediated nitration, by acting as a peroxynitrite isomerase that converts peroxynitrite to nitrate. Therefore, this protein likely plays a role in peroxynitrite sensing and in the detoxification of reactive nitrogen and oxygen species (RNS and ROS, respectively). Is able to bind nitric oxide (NO) in vitro, but may act as a sensor of peroxynitrite levels in vivo. This Paenarthrobacter aurescens (strain TC1) protein is Peroxynitrite isomerase.